The primary structure comprises 866 residues: Dynamin-2 (866 aa).

In terms of domain architecture, Dynamin-type G spans 28–294 (HLDLPQIAVV…LTNHIRESLP (267 aa)). Residues 38–45 (GGQSAGKS) form a G1 motif region. Residues Ser-41, Gly-43, Lys-44, Ser-45, Ser-46, Arg-59, and Gly-60 each contribute to the GDP site. Positions 64 to 66 (VTR) are G2 motif. Residues 136-139 (DLPG) form a G3 motif region. A G4 motif region spans residues 205 to 208 (TKLD). Positions 206, 208, and 211 each coordinate GDP. Tyr-231 carries the post-translational modification Phosphotyrosine. Residues 235–238 (VNRS) are G5 motif. GDP is bound by residues Asn-236, Arg-237, and Gln-239. Lys-299 carries the post-translational modification N6-acetyllysine. One can recognise a PH domain in the interval 515–621 (QVIRRGWLTI…WKASFLRAGV (107 aa)). Tyr-593 is modified (phosphotyrosine). An N6-acetyllysine modification is found at Lys-594. A GED domain is found at 649-740 (VETIRNLVDS…IIGDISTSTV (92 aa)). The disordered stretch occupies residues 737–866 (TSTVSTPVPP…IRPAEPSLLD (130 aa)). The residue at position 751 (Thr-751) is a Phosphothreonine. Residues 752-763 (WIQNTSSHSPTP) are compositionally biased toward polar residues. The residue at position 760 (Ser-760) is a Phosphoserine; by CDK1. 3 stretches are compositionally biased toward pro residues: residues 784 to 794 (TPGPPLIPVPV), 802 to 811 (PPIPSRPGPH), and 822 to 851 (SAPPQIPSRPARIPPGIPPGVPSRRPPAAP).

It belongs to the TRAFAC class dynamin-like GTPase superfamily. Dynamin/Fzo/YdjA family. Oligomerizes into a helical polymer that self-assembles around the vesicle membrane, when associated to the menbrane through lipid binding. Interacts with SHANK1 and SHANK2. Interacts with SNX9. Interacts (via C-terminal proline-rich domain (PRD)) with SNX18 (via SH3 domain); this interaction regulates ATG9A and ATG16L1 trafficking from recycling endosomes to sites of autophagosome formation. Interacts with SNX33 (via SH3 domain). Interacts with MYO1E (via SH3 domain). Interacts with PSTPIP1 (via SH3 domain). Interacts with CTNND2. Interacts (via C-terminal proline-rich domain (PRD)) with BIN1 (via SH3 domain); this interaction allows the recruitment of DNM2 to the membrane tubules and inhibits self-assembly-stimulated GTPase activity on the membrane. Interacts with GABARAP, GABARAPL1 and GABARAPL2. Interacts with MAP1LC3B (the lipidate and non-lipidated LC3 form); this interaction mediates recycling endosome scission leading to autophagosome release. Interacts with ITSN1. Interacts with MYOF. Interacts (via C-terminal proline-rich domain (PRD)) with SH3BP4 (via SH3 domain); this interaction controls the GTPase activity and is prevented by EGFR-induced tyrosine phosphorylation of either DNM2 or SH3BP4. May interact with PIK3C3. May be a component of a complex composed of RAB5A (in GDP-bound form), DYN2 and PIK3C3. Interacts with SDC4; this interaction is markedly enhanced at focal ahesion site upon induction of focal adhesions and stress-fiber formation. Interacts with ACTN1. Interacts with CTTN; this interaction stimulates the intrinsic GTPase activity of DNM2 and stabilizes the association of DNM2 and actin filaments; in addition this interaction is stimulated by ligand binding to the receptor, leading to the recruitment of the DNM2-CTTN complex to the sequestered receptor-ligand complex to its internalization. Interacts with NOSTRIN (via SH3 domain); this interaction allows the recruitment of NOS3 to dynamin-positive structures. Interacts with TUBG1; this interaction may participate in centrosome cohesion. Post-translationally, phosphorylation at Ser-844 by GSK3-alpha relieves the inhibition of BIN1 and promotes endocytosis. Phosphorylation at Ser-760 by CDK1 is greatly increased upon mitotic entry. It regulates cytokinesis downstream of calcineurin, and does not affect clathrin-mediated endocytosis. Dephosphorylated by calcineurin/PP2 during cytokinesis in a Ca(2+)- and calmodulin-dependent manner. Phosphorylated on tyrosine residues by EGFR and after activation of SRC.

The protein localises to the cytoplasm. The protein resides in the cytoskeleton. It is found in the cytoplasmic vesicle. It localises to the clathrin-coated vesicle. Its subcellular location is the cell projection. The protein localises to the uropodium. The protein resides in the endosome. It is found in the microtubule organizing center. It localises to the centrosome. Its subcellular location is the centriole. The protein localises to the recycling endosome. The protein resides in the phagocytic cup. It is found in the phagosome membrane. It localises to the podosome. Its subcellular location is the cell junction. The protein localises to the postsynaptic density. The protein resides in the synapse. It is found in the synaptosome. It localises to the midbody. Its subcellular location is the membrane. The protein localises to the clathrin-coated pit. The catalysed reaction is GTP + H2O = GDP + phosphate + H(+). Functionally, catalyzes the hydrolysis of GTP and utilizes this energy to mediate vesicle scission at plasma membrane during endocytosis and filament remodeling at many actin structures during organization of the actin cytoskeleton. Plays an important role in vesicular trafficking processes, namely clathrin-mediated endocytosis (CME), exocytic and clathrin-coated vesicle from the trans-Golgi network, and PDGF stimulated macropinocytosis. During vesicular trafficking process, associates to the membrane, through lipid binding, and self-assembles into ring-like structure through oligomerization to form a helical polymer around the vesicle membrane and leading to vesicle scission. Plays a role in organization of the actin cytoskeleton by mediating arrangement of stress fibers and actin bundles in podocytes. During organization of the actin cytoskeleton, self-assembles into ring-like structure that directly bundles actin filaments to form typical membrane tubules decorated with dynamin spiral polymers. Self-assembly increases GTPase activity and the GTP hydrolysis causes the rapid depolymerization of dynamin spiral polymers, and results in dispersion of actin bundles. Remodels, through its interaction with CTTN, bundled actin filaments in a GTPase-dependent manner and plays a role in orchestrating the global actomyosin cytoskeleton. The interaction with CTTN stabilizes the interaction of DNM2 and actin filaments and stimulates the intrinsic GTPase activity that results in actin filament-barbed ends and increases the sensitivity of filaments in bundles to the actin depolymerizing factor, CFL1. Plays a role in the autophagy process, by participating in the formation of ATG9A vesicles destined for the autophagosomes through its interaction with SNX18, by mediating recycling endosome scission leading to autophagosome release through MAP1LC3B interaction. Also regulates maturation of apoptotic cell corpse-containing phagosomes by recruiting PIK3C3 to the phagosome membrane. Also plays a role in cytokinesis. May participate in centrosome cohesion through its interaction with TUBG1. Plays a role in the regulation of neuron morphology, axon growth and formation of neuronal growth cones. Involved in membrane tubulation. The polypeptide is Dynamin-2 (Bos taurus (Bovine)).